The primary structure comprises 354 residues: Ferrochelatase (354 aa).

Fe cation contacts are provided by His204 and Glu306.

The protein belongs to the ferrochelatase family.

It is found in the cytoplasm. The enzyme catalyses heme b + 2 H(+) = protoporphyrin IX + Fe(2+). It participates in porphyrin-containing compound metabolism; protoheme biosynthesis; protoheme from protoporphyrin-IX: step 1/1. Functionally, catalyzes the ferrous insertion into protoporphyrin IX. In Coxiella burnetii (strain RSA 493 / Nine Mile phase I), this protein is Ferrochelatase.